A 212-amino-acid polypeptide reads, in one-letter code: ATP phosphoribosyltransferase (212 aa).

Belongs to the ATP phosphoribosyltransferase family. Short subfamily. As to quaternary structure, heteromultimer composed of HisG and HisZ subunits.

Its subcellular location is the cytoplasm. It catalyses the reaction 1-(5-phospho-beta-D-ribosyl)-ATP + diphosphate = 5-phospho-alpha-D-ribose 1-diphosphate + ATP. The protein operates within amino-acid biosynthesis; L-histidine biosynthesis; L-histidine from 5-phospho-alpha-D-ribose 1-diphosphate: step 1/9. Its function is as follows. Catalyzes the condensation of ATP and 5-phosphoribose 1-diphosphate to form N'-(5'-phosphoribosyl)-ATP (PR-ATP). Has a crucial role in the pathway because the rate of histidine biosynthesis seems to be controlled primarily by regulation of HisG enzymatic activity. The chain is ATP phosphoribosyltransferase from Clostridium botulinum (strain Okra / Type B1).